Here is a 41-residue protein sequence, read N- to C-terminus: Antifungal peptide 2 (41 aa).

Gln-1 is subject to Pyrrolidone carboxylic acid. Disulfide bonds link Cys-3-Cys-17, Cys-7-Cys-37, Cys-11-Cys-23, Cys-16-Cys-30, and Cys-35-Cys-39. Positions 4–41 (ASRCPRPCNAGLCCSIYGYCGSGAAYCGAGNCRCQCRG) constitute a Chitin-binding type-1 domain.

In terms of assembly, monomer.

Its function is as follows. Has antifungal activity against P.infestans, A.lycopersici, V.dahliae, G.zeae, A.nicotianae, F.moniliforme, F.oxysporum and C.gossypii. This chain is Antifungal peptide 2, found in Eucommia ulmoides (Hardy rubber tree).